The primary structure comprises 185 residues: Threonylcarbamoyl-AMP synthase (185 aa).

Positions 1–185 (MDNLQQVVSA…AFSDTVLRQG (185 aa)) constitute a YrdC-like domain.

Belongs to the SUA5 family. TsaC subfamily.

Its subcellular location is the cytoplasm. The enzyme catalyses L-threonine + hydrogencarbonate + ATP = L-threonylcarbamoyladenylate + diphosphate + H2O. Its function is as follows. Required for the formation of a threonylcarbamoyl group on adenosine at position 37 (t(6)A37) in tRNAs that read codons beginning with adenine. Catalyzes the conversion of L-threonine, HCO(3)(-)/CO(2) and ATP to give threonylcarbamoyl-AMP (TC-AMP) as the acyladenylate intermediate, with the release of diphosphate. This chain is Threonylcarbamoyl-AMP synthase, found in Photobacterium profundum (strain SS9).